The chain runs to 467 residues: Putative odorant receptor 85e (467 aa).

Residues 1–60 (MASLQFHGNVDADIRYDISLDPARESNLFRLLMGLQLANGTKPSPRLPKWWPKRLEMIGK) are Cytoplasmic-facing. Residues 61-81 (VLPKAYCSMVIFTSLHLGVLF) form a helical membrane-spanning segment. Topologically, residues 82 to 98 (TKTTLDVLPTGELQAIT) are extracellular. Residues 99 to 119 (DALTMTIIYFFTGYGTIYWCL) form a helical membrane-spanning segment. At 120-159 (RSRRLLAYMEHMNREYRHHSLAGVTFVSSHAAFRMSRNFT) the chain is on the cytoplasmic side. A helical transmembrane segment spans residues 160–180 (VVWIMSCLLGVISWGVSPLML). Topologically, residues 181–212 (GIRMLPLQCWYPFDALGPGTYTAVYATQLFGQ) are extracellular. The helical transmembrane segment at 213 to 233 (IMVGMTFGFGGSLFVTLSLLL) threads the bilayer. Topologically, residues 234–286 (LGQFDVLYCSLKNLDAHTKLLGGESVNGLSSLQEELLLGDSKRELNQYVLLQE) are cytoplasmic. The helical transmembrane segment at 287-307 (HPTDLLRLSAGRKCPDQGNAF) threads the bilayer. The Extracellular portion of the chain corresponds to 308–334 (HNALVECIRLHRFILHCSQELENLFSP). Residues 335–355 (YCLVKSLQITFQLCLLVFVGV) form a helical membrane-spanning segment. Residues 356 to 367 (SGTREVLRIVNQ) are Cytoplasmic-facing. Residues 368–388 (LQYLGLTIFELLMFTYCGELL) form a helical membrane-spanning segment. Residues 389–467 (SRHSIRSGDA…LAAKKTESEL (79 aa)) lie on the Extracellular side of the membrane.

This sequence belongs to the insect chemoreceptor superfamily. Heteromeric odorant receptor channel (TC 1.A.69) family. Or2a subfamily. As to quaternary structure, interacts with Orco. Complexes exist early in the endomembrane system in olfactory sensory neurons (OSNs), coupling these complexes to the conserved ciliary trafficking pathway. Expressed in 15% of the 120 sensory neurons within the maxillary palp.

It localises to the cell membrane. In terms of biological role, odorant receptor which mediates acceptance or avoidance behavior, depending on its substrates. The odorant receptor repertoire encodes a large collection of odor stimuli that vary widely in identity, intensity, and duration. May form a complex with Orco to form odorant-sensing units, providing sensitive and prolonged odorant signaling and calcium permeability. In Drosophila melanogaster (Fruit fly), this protein is Putative odorant receptor 85e (Or85e).